A 336-amino-acid polypeptide reads, in one-letter code: Nuclear egress protein 2 (336 aa).

Residues 1–315 (MASPEERLLD…AWRYSWRATP (315 aa)) are Perinuclear space-facing. 2 disordered regions span residues 193–221 (RSGQ…GCLG) and 277–297 (RTRE…VPPE). Residues 277–288 (RTRETRRMRGSH) show a composition bias toward basic residues. The helical transmembrane segment at 316–333 (YLARVLAVTAVALLLMFL) threads the bilayer. The Nuclear segment spans residues 334-336 (RWT).

Belongs to the herpesviridae NEC2 protein family. As to quaternary structure, forms a heterodimeric viral nuclear egress complex (NEC) with NEC1. Interacts with host IKBKE; this interaction inhibits host IKBKE kinase activity and IRF3 nuclear translocation. In terms of processing, phosphorylated.

The protein localises to the host nucleus inner membrane. The protein resides in the host cytoplasm. Its subcellular location is the host perinuclear region. In terms of biological role, plays an essential role in virion nuclear egress, the first step of virion release from infected cell. Within the host nucleus, NEC1 interacts with the newly formed capsid through the vertexes and directs it to the inner nuclear membrane by associating with NEC2. Induces the budding of the capsid at the inner nuclear membrane as well as its envelopment into the perinuclear space. There, the NEC1/NEC2 complex promotes the fusion of the enveloped capsid with the outer nuclear membrane and the subsequent release of the viral capsid into the cytoplasm where it will reach the secondary budding sites in the host Golgi or trans-Golgi network. Inhibits host IKBKE and IRF3, thereby impairing type I IFN signaling. The polypeptide is Nuclear egress protein 2 (Homo sapiens (Human)).